The sequence spans 347 residues: Uroporphyrinogen decarboxylase (347 aa).

Substrate contacts are provided by residues 24–28 (RQAGR), Phe-42, Asp-73, Tyr-150, Thr-205, and His-320.

The protein belongs to the uroporphyrinogen decarboxylase family. In terms of assembly, homodimer.

Its subcellular location is the cytoplasm. It carries out the reaction uroporphyrinogen III + 4 H(+) = coproporphyrinogen III + 4 CO2. Its pathway is porphyrin-containing compound metabolism; protoporphyrin-IX biosynthesis; coproporphyrinogen-III from 5-aminolevulinate: step 4/4. Its function is as follows. Catalyzes the decarboxylation of four acetate groups of uroporphyrinogen-III to yield coproporphyrinogen-III. The sequence is that of Uroporphyrinogen decarboxylase from Gloeobacter violaceus (strain ATCC 29082 / PCC 7421).